A 357-amino-acid polypeptide reads, in one-letter code: Putative ABC transporter ATP-binding protein MG303 (357 aa).

Residues 72–312 enclose the ABC transporter domain; the sequence is LFFNNISVFV…TSWLMQYGIT (241 aa). 107-114 is a binding site for ATP; sequence GESGSGKT.

It belongs to the ABC transporter superfamily.

This is Putative ABC transporter ATP-binding protein MG303 from Mycoplasma genitalium (strain ATCC 33530 / DSM 19775 / NCTC 10195 / G37) (Mycoplasmoides genitalium).